Reading from the N-terminus, the 173-residue chain is Alpha-crystallin A chain (173 aa).

Met-1 carries the N-acetylmethionine modification. The interval 1 to 63 is required for complex formation with BFSP1 and BFSP2; that stretch reads MDIAIQHPWF…RTVLDSGISE (63 aa). Gln-6 is modified (deamidated glutamine; partial). Ser-45 carries the post-translational modification Phosphoserine. At Gln-50 the chain carries Deamidated glutamine; partial. Positions 52–162 constitute a sHSP domain; sequence LFRTVLDSGI…GHSERAIPVS (111 aa). 2 positions are modified to N6-acetyllysine: Lys-70 and Lys-99. His-100 is a Zn(2+) binding site. Position 101 is a deamidated asparagine; partial (Asn-101). Positions 102 and 107 each coordinate Zn(2+). Phosphoserine is present on Ser-122. Asn-123 bears the Deamidated asparagine; partial mark. The tract at residues 144-173 is disordered; it reads PKVPSGMDAGHSERAIPVSREEKPSSAPSS. A compositionally biased stretch (basic and acidic residues) spans 153–167; that stretch reads GHSERAIPVSREEKP. His-154 provides a ligand contact to Zn(2+). Ser-162 carries an O-linked (GlcNAc) serine glycan.

It belongs to the small heat shock protein (HSP20) family. In terms of assembly, heteromer composed of three CRYAA and one CRYAB subunits. Inter-subunit bridging via zinc ions enhances stability, which is crucial as there is no protein turn over in the lens. Can also form homodimers and homotetramers (dimers of dimers) which serve as the building blocks of homooligomers. Within homooligomers, the zinc-binding motif is created from residues of 3 different molecules. His-100 and Glu-102 from one molecule are ligands of the zinc ion, and His-107 and His-154 residues from additional molecules complete the site with tetrahedral coordination geometry. Part of a complex required for lens intermediate filament formation composed of BFSP1, BFSP2 and CRYAA. Acetylation at Lys-70 may increase chaperone activity. In terms of processing, undergoes age-dependent proteolytical cleavage at the C-terminus.

The protein localises to the cytoplasm. It localises to the nucleus. Functionally, contributes to the transparency and refractive index of the lens. Acts as a chaperone, preventing aggregation of various proteins under a wide range of stress conditions. Required for the correct formation of lens intermediate filaments as part of a complex composed of BFSP1, BFSP2 and CRYAA. This is Alpha-crystallin A chain (CRYAA) from Melursus ursinus (Sloth bear).